Here is a 353-residue protein sequence, read N- to C-terminus: THUMP domain-containing protein 1 (353 aa).

The segment covering 1–10 has biased composition (polar residues); the sequence is MAAPAQQTTQ. Disordered regions lie at residues 1–20 and 73–96; these read MAAP…KGKA and YGPE…DDAE. A2 carries the N-acetylalanine modification. Residue T79 is modified to Phosphothreonine. Phosphoserine is present on residues S86, S88, and S119. One can recognise a THUMP domain in the interval 147-254; sequence DMYKTKKKKT…KAVCCLSVVK (108 aa). Position 270 is a phosphoserine (S270). Residues 270-353 form a disordered region; sequence SPKDPSQLNS…GSKSNENDFS (84 aa). Polar residues predominate over residues 273–282; the sequence is DPSQLNSKQG. Positions 283–296 are enriched in basic and acidic residues; the sequence is NGKEAKLESADKSD. Polar residues predominate over residues 297–327; it reads QNNTAEGKNNQQVPENTEELGQTKPTSNPQV.

The protein belongs to the THUMPD1 family. As to quaternary structure, interacts with NAT10. Binds tRNA.

Its function is as follows. Functions as a tRNA-binding adapter to mediate NAT10-dependent tRNA acetylation modifying cytidine to N4-acetylcytidine (ac4C). The sequence is that of THUMP domain-containing protein 1 (THUMPD1) from Homo sapiens (Human).